The sequence spans 297 residues: Aspartate carbamoyltransferase catalytic subunit (297 aa).

Positions 51 and 52 each coordinate carbamoyl phosphate. Position 79 (Lys-79) interacts with L-aspartate. Carbamoyl phosphate-binding residues include Arg-101, His-130, and Gln-133. L-aspartate is bound by residues Arg-163 and Arg-215. Positions 256 and 257 each coordinate carbamoyl phosphate.

The protein belongs to the aspartate/ornithine carbamoyltransferase superfamily. ATCase family. In terms of assembly, heterododecamer (2C3:3R2) of six catalytic PyrB chains organized as two trimers (C3), and six regulatory PyrI chains organized as three dimers (R2).

The enzyme catalyses carbamoyl phosphate + L-aspartate = N-carbamoyl-L-aspartate + phosphate + H(+). Its pathway is pyrimidine metabolism; UMP biosynthesis via de novo pathway; (S)-dihydroorotate from bicarbonate: step 2/3. Catalyzes the condensation of carbamoyl phosphate and aspartate to form carbamoyl aspartate and inorganic phosphate, the committed step in the de novo pyrimidine nucleotide biosynthesis pathway. In Ehrlichia ruminantium (strain Gardel), this protein is Aspartate carbamoyltransferase catalytic subunit.